A 62-amino-acid chain; its full sequence is Small ribosomal subunit protein bS21 (62 aa).

Residues 43-62 (EKRKRKAMALQKQRKRRSRY) form a disordered region. Over residues 44–62 (KRKRKAMALQKQRKRRSRY) the composition is skewed to basic residues.

The protein belongs to the bacterial ribosomal protein bS21 family.

This Trichodesmium erythraeum (strain IMS101) protein is Small ribosomal subunit protein bS21.